The chain runs to 267 residues: NAD kinase 2 (267 aa).

Residue Asp52 is the Proton acceptor of the active site. Residues 52-53 (DG), 124-125 (NE), Arg151, Asp153, 164-169 (TAYNKS), and Ala188 contribute to the NAD(+) site.

It belongs to the NAD kinase family. It depends on a divalent metal cation as a cofactor.

It localises to the cytoplasm. It catalyses the reaction NAD(+) + ATP = ADP + NADP(+) + H(+). Functionally, involved in the regulation of the intracellular balance of NAD and NADP, and is a key enzyme in the biosynthesis of NADP. Catalyzes specifically the phosphorylation on 2'-hydroxyl of the adenosine moiety of NAD to yield NADP. The chain is NAD kinase 2 from Bacillus subtilis (strain 168).